The following is a 74-amino-acid chain: MKSGIHPNYVETNVVCGCGNTFTTRSTKESGHIVVEVCSQCHPFYTGKQKILDSGGRVARFEARYGKRKAAADK.

Zn(2+)-binding residues include cysteine 16, cysteine 18, cysteine 38, and cysteine 41.

Belongs to the bacterial ribosomal protein bL31 family. Type A subfamily. In terms of assembly, part of the 50S ribosomal subunit. Zn(2+) serves as cofactor.

Binds the 23S rRNA. The polypeptide is Large ribosomal subunit protein bL31 (Mycobacteroides abscessus (strain ATCC 19977 / DSM 44196 / CCUG 20993 / CIP 104536 / JCM 13569 / NCTC 13031 / TMC 1543 / L948) (Mycobacterium abscessus)).